The primary structure comprises 299 residues: GTPase Era (299 aa).

The 168-residue stretch at 5–172 (KSGFVSIIGR…IDVLKSFLPE (168 aa)) folds into the Era-type G domain. The interval 13–20 (GRPNVGKS) is G1. 13-20 (GRPNVGKS) serves as a coordination point for GTP. Positions 39–43 (QTTRN) are G2. Residues 60–63 (DTPG) are G3. Residues 60-64 (DTPGI) and 122-125 (NKID) contribute to the GTP site. Residues 122-125 (NKID) form a G4 region. Residues 151–153 (ISA) are G5. The 78-residue stretch at 203-280 (TSEEIPHAIG…YLELWVKVQR (78 aa)) folds into the KH type-2 domain.

It belongs to the TRAFAC class TrmE-Era-EngA-EngB-Septin-like GTPase superfamily. Era GTPase family. In terms of assembly, monomer.

The protein resides in the cytoplasm. It is found in the cell membrane. In terms of biological role, an essential GTPase that binds both GDP and GTP, with rapid nucleotide exchange. Plays a role in 16S rRNA processing and 30S ribosomal subunit biogenesis and possibly also in cell cycle regulation and energy metabolism. This Staphylococcus epidermidis (strain ATCC 35984 / DSM 28319 / BCRC 17069 / CCUG 31568 / BM 3577 / RP62A) protein is GTPase Era.